We begin with the raw amino-acid sequence, 286 residues long: MKLIIVSGRSGSGKSTALHVLEDMGYYCIDNLPIGLLSPLTQEVLDQGKTQNQQLAVSIDARNLYRDLSDFPSIYAALQAHNIDVEIIYLDANDATLIKRFHATRRKHPLSSKSTSLKEAIAKEKQLLEPIATLANLYIDTSDLSIYQLRDQVKIRVIGHKTQELALLFQSFGFKHGVPSDSDMVFDVRCLPNPYWDTALRGYKGTDQEIIEFLKQHPEPEQMLQHIISFLETWIPHFQNSNRTYMTISIGCTGGQHRSVYICERLGEHFKKKYDNVQVRHKELAQ.

8–15 (GRSGSGKS) provides a ligand contact to ATP. A GTP-binding site is contributed by 60–63 (DARN).

This sequence belongs to the RapZ-like family.

Its function is as follows. Displays ATPase and GTPase activities. The polypeptide is Nucleotide-binding protein HCH_05324 (Hahella chejuensis (strain KCTC 2396)).